We begin with the raw amino-acid sequence, 273 residues long: Salivary glue protein Sgs-3 (273 aa).

The N-terminal stretch at 1–23 (MKLTIAISLASILLLSVAHVAQG) is a signal peptide. The segment covering 47 to 57 (TTTTTTTTCAP) has biased composition (low complexity). A disordered region spans residues 47 to 225 (TTTTTTTTCA…TPKPTNKPGC (179 aa)). Pro residues predominate over residues 58-67 (PTRPPPPPCT). A compositionally biased stretch (low complexity) spans 83-225 (RRTTTTTRQT…TPKPTNKPGC (143 aa)).

The sequence is that of Salivary glue protein Sgs-3 (Sgs3) from Drosophila yakuba (Fruit fly).